We begin with the raw amino-acid sequence, 156 residues long: UPF0266 membrane protein YobD (156 aa).

Residues 1-5 (MTITD) are Periplasmic-facing. The chain crosses the membrane as a helical span at residues 6–26 (LVLILFIAALLAYALYDQFIM). Over 27–44 (PRRNGPTLLSIALLRRGR) the chain is Cytoplasmic. The chain crosses the membrane as a helical span at residues 45 to 65 (VDSVIFVGLVAILIYNNVTSH). Position 66 (Gly-66) is a topological domain, periplasmic. The chain crosses the membrane as a helical span at residues 67–87 (AQMTTWLLSALALMGFYIFWI). The Cytoplasmic portion of the chain corresponds to 88-156 (RTPRIIFKQR…LLIENQYLKI (69 aa)).

This sequence belongs to the UPF0266 family.

It is found in the cell inner membrane. The chain is UPF0266 membrane protein YobD (yobD) from Salmonella typhimurium (strain LT2 / SGSC1412 / ATCC 700720).